We begin with the raw amino-acid sequence, 736 residues long: Eukaryotic translation initiation factor 3 subunit B (736 aa).

Residues 1-94 (MAAVFDDIRL…LFIEFEDAGA (94 aa)) are sufficient for interaction with HCR1 and TIF32. A sufficient for interaction with PIC8 region spans residues 1–219 (MAAVFDDIRL…GIASWGGPQF (219 aa)). The region spanning 37 to 120 (RYVVVDGAPV…HRLWVNGLDD (84 aa)) is the RRM domain. WD repeat units lie at residues 140–182 (EFEA…PENV), 186–224 (RRNW…RLRR), 226–244 (AHPD…YLVT), 245–284 (FSSE…CVKT), 288–328 (PPQQ…QLLG), 332–375 (MKIE…QSCK), 443–483 (EIKD…VSFY), 511–557 (AIDG…TEKI), 566–604 (ATLR…KAEN), and 616–662 (VREE…QDAM).

It belongs to the eIF-3 subunit B family. As to quaternary structure, component of the eukaryotic translation initiation factor 3 (eIF-3) complex.

The protein resides in the cytoplasm. Functionally, RNA-binding component of the eukaryotic translation initiation factor 3 (eIF-3) complex, which is involved in protein synthesis of a specialized repertoire of mRNAs and, together with other initiation factors, stimulates binding of mRNA and methionyl-tRNAi to the 40S ribosome. The eIF-3 complex specifically targets and initiates translation of a subset of mRNAs involved in cell proliferation. This chain is Eukaryotic translation initiation factor 3 subunit B, found in Eremothecium gossypii (strain ATCC 10895 / CBS 109.51 / FGSC 9923 / NRRL Y-1056) (Yeast).